The chain runs to 372 residues: Tetraacyldisaccharide 4'-kinase (372 aa).

Position 65 to 72 (65 to 72 (TVGGTGKT)) interacts with ATP. The tract at residues 351–372 (QSTATGMADGLDKEHQDGQPAA) is disordered. Basic and acidic residues predominate over residues 360–372 (GLDKEHQDGQPAA).

The protein belongs to the LpxK family.

The catalysed reaction is a lipid A disaccharide + ATP = a lipid IVA + ADP + H(+). The protein operates within glycolipid biosynthesis; lipid IV(A) biosynthesis; lipid IV(A) from (3R)-3-hydroxytetradecanoyl-[acyl-carrier-protein] and UDP-N-acetyl-alpha-D-glucosamine: step 6/6. Functionally, transfers the gamma-phosphate of ATP to the 4'-position of a tetraacyldisaccharide 1-phosphate intermediate (termed DS-1-P) to form tetraacyldisaccharide 1,4'-bis-phosphate (lipid IVA). The polypeptide is Tetraacyldisaccharide 4'-kinase (Cupriavidus metallidurans (strain ATCC 43123 / DSM 2839 / NBRC 102507 / CH34) (Ralstonia metallidurans)).